The sequence spans 130 residues: Ribosome-binding factor A (130 aa).

Belongs to the RbfA family. As to quaternary structure, monomer. Binds 30S ribosomal subunits, but not 50S ribosomal subunits or 70S ribosomes.

The protein localises to the cytoplasm. One of several proteins that assist in the late maturation steps of the functional core of the 30S ribosomal subunit. Associates with free 30S ribosomal subunits (but not with 30S subunits that are part of 70S ribosomes or polysomes). Required for efficient processing of 16S rRNA. May interact with the 5'-terminal helix region of 16S rRNA. The sequence is that of Ribosome-binding factor A from Roseiflexus sp. (strain RS-1).